The chain runs to 1046 residues: Piwi-like protein 2 (1046 aa).

Residues 1–12 are compositionally biased toward pro residues; the sequence is MDPKRPTFPSPP. The tract at residues 1–35 is disordered; sequence MDPKRPTFPSPPGVIRAPWQQSTEDQSQLLDQPSL. The segment covering 19 to 31 has biased composition (polar residues); that stretch reads WQQSTEDQSQLLD. Residues 462–575 enclose the PAZ domain; that stretch reads SVLDVMNLIY…LLPELSFMTG (114 aa). Residues 741–1032 enclose the Piwi domain; the sequence is LVVCIMTGNR…LAFLSGQYLH (292 aa). Catalysis depends on residues aspartate 818, glutamate 856, aspartate 888, and histidine 1021.

It belongs to the argonaute family. Piwi subfamily. In terms of assembly, component of the PET complex. Requires Mg(2+) as cofactor. Post-translationally, methylated on arginine residues; required for the interaction with Tudor domain-containing protein and subsequent localization to the meiotic nuage, also named P granule. As to expression, detected in primordial germ cells (PGCs) from 3 dpf. In adult, it is found in both the female and male gonad. In the ovary, it is present in all stages of germ cell differentiation. In testis, it is present in mitotic and meiotic germ cells. No protein has been detected in the fully differentiated sperm cell.

It is found in the cytoplasm. It localises to the nucleus. Functionally, endoribonuclease that plays a central role during spermatogenesis by repressing transposable elements and preventing their mobilization, which is essential for the germline integrity. Plays an essential role in germ cell differentiation and meiosis, independently of the function in transposable elements repression. Acts via the piRNA metabolic process, which mediates the repression of transposable elements during meiosis by forming complexes composed of piRNAs and Piwi proteins and govern the methylation and subsequent repression of transposons. During piRNA biosynthesis, plays a key role in the piRNA amplification loop, also named ping-pong amplification cycle, by acting as a 'slicer-competent' piRNA endoribonuclease that cleaves primary piRNAs, which are then loaded onto 'slicer-incompetent' piwil4. Piwil2 slicing produces a pre-miRNA intermediate, which is then processed in mature piRNAs, and as well as a 16 nucleotide by-product that is degraded. Required for piwil4/miwi2 nuclear localization and association with secondary piRNAs antisense. Represses circadian rhythms by promoting the stability and activity of core clock components BMAL1 and CLOCK. This chain is Piwi-like protein 2 (piwil2), found in Danio rerio (Zebrafish).